The primary structure comprises 287 residues: Elongation factor Ts (287 aa).

The tract at residues 80-83 (TDFL) is involved in Mg(2+) ion dislocation from EF-Tu.

Belongs to the EF-Ts family.

The protein resides in the cytoplasm. In terms of biological role, associates with the EF-Tu.GDP complex and induces the exchange of GDP to GTP. It remains bound to the aminoacyl-tRNA.EF-Tu.GTP complex up to the GTP hydrolysis stage on the ribosome. In Pseudomonas fluorescens (strain Pf0-1), this protein is Elongation factor Ts.